The following is a 63-amino-acid chain: Small ribosomal subunit protein eS31 (63 aa).

4 residues coordinate Zn(2+): Cys34, Cys37, Cys53, and Cys56. The C4-type zinc-finger motif lies at 34–56; the sequence is CPKCGSVMAFHREPVPRWHCGKC.

It belongs to the eukaryotic ribosomal protein eS31 family. As to quaternary structure, part of the 30S ribosomal subunit. It depends on Zn(2+) as a cofactor.

The chain is Small ribosomal subunit protein eS31 from Pyrobaculum neutrophilum (strain DSM 2338 / JCM 9278 / NBRC 100436 / V24Sta) (Thermoproteus neutrophilus).